A 210-amino-acid chain; its full sequence is DNA dC-&gt;dU-editing enzyme APOBEC-3H (210 aa).

A CMP/dCMP-type deaminase domain is found at 4–126 (LTAKTFSLQF…PNYQEGLLLL (123 aa)). A Zn(2+)-binding site is contributed by His54. Glu56 serves as the catalytic Proton donor. Zn(2+) is bound by residues Cys85 and Cys88. A necessary and sufficient for localization to the cytoplasm region spans residues 182–210 (SRSVDVLENGLRSLQLGPVTPSSSIRNSR).

It belongs to the cytidine and deoxycytidylate deaminase family. Homodimer. Zn(2+) serves as cofactor.

The protein resides in the cytoplasm. The enzyme catalyses a 2'-deoxycytidine in single-stranded DNA + H2O + H(+) = a 2'-deoxyuridine in single-stranded DNA + NH4(+). Antiviral activity is neutralized by the simian immunodeficiency virus rhesus (SIV-mac) virion infectivity factor (VIF). DNA deaminase (cytidine deaminase) which acts as an inhibitor of retrovirus replication and retrotransposon mobility via deaminase-dependent and -independent mechanisms. Exhibits antiviral activity against vif-deficient HIV-1. After the penetration of retroviral nucleocapsids into target cells of infection and the initiation of reverse transcription, it can induce the conversion of cytosine to uracil in the minus-sense single-strand viral DNA, leading to G-to-A hypermutations in the subsequent plus-strand viral DNA. The resultant detrimental levels of mutations in the proviral genome, along with a deamination-independent mechanism that works prior to the proviral integration, together exert efficient antiretroviral effects in infected target cells. Selectively targets single-stranded DNA and does not deaminate double-stranded DNA or single- or double-stranded RNA. The polypeptide is DNA dC-&gt;dU-editing enzyme APOBEC-3H (Macaca mulatta (Rhesus macaque)).